The chain runs to 356 residues: DNA polymerase IV (356 aa).

A UmuC domain is found at 1 to 188 (MDTSRKIIHI…IPVTKFYGVG (188 aa)). Mg(2+) contacts are provided by Asp11 and Asp106. The active site involves Glu107.

This sequence belongs to the DNA polymerase type-Y family. Monomer. Mg(2+) is required as a cofactor.

The protein localises to the cytoplasm. It carries out the reaction DNA(n) + a 2'-deoxyribonucleoside 5'-triphosphate = DNA(n+1) + diphosphate. Poorly processive, error-prone DNA polymerase involved in untargeted mutagenesis. Copies undamaged DNA at stalled replication forks, which arise in vivo from mismatched or misaligned primer ends. These misaligned primers can be extended by PolIV. Exhibits no 3'-5' exonuclease (proofreading) activity. May be involved in translesional synthesis, in conjunction with the beta clamp from PolIII. The protein is DNA polymerase IV of Listeria monocytogenes serotype 4b (strain F2365).